We begin with the raw amino-acid sequence, 171 residues long: 3-hydroxydecanoyl-[acyl-carrier-protein] dehydratase (171 aa).

The active site involves H70.

Belongs to the thioester dehydratase family. FabA subfamily. Homodimer.

The protein localises to the cytoplasm. It carries out the reaction a (3R)-hydroxyacyl-[ACP] = a (2E)-enoyl-[ACP] + H2O. The enzyme catalyses (3R)-hydroxydecanoyl-[ACP] = (2E)-decenoyl-[ACP] + H2O. It catalyses the reaction (2E)-decenoyl-[ACP] = (3Z)-decenoyl-[ACP]. It functions in the pathway lipid metabolism; fatty acid biosynthesis. Its function is as follows. Necessary for the introduction of cis unsaturation into fatty acids. Catalyzes the dehydration of (3R)-3-hydroxydecanoyl-ACP to E-(2)-decenoyl-ACP and then its isomerization to Z-(3)-decenoyl-ACP. Can catalyze the dehydratase reaction for beta-hydroxyacyl-ACPs with saturated chain lengths up to 16:0, being most active on intermediate chain length. The sequence is that of 3-hydroxydecanoyl-[acyl-carrier-protein] dehydratase from Shewanella sediminis (strain HAW-EB3).